Consider the following 457-residue polypeptide: MDTNNNIEKEILALVKQNPKVSLIEYENYFSQLKYNPNASKSDIAFFYAPNQVLCTTITAKYGALLKEILSQNKVGMHLAHSVDVRIEVAPKIQINAQSNINYKAIKTSVKDSYTFENFVVGSCNNTVYEIAKKVAQSDTPPYNPVLFYGGTGLGKTHILNAIGNHALEKHKKVVLVTSEDFLTDFLKHLDNKTMDSFKAKYRHCDFFLLDDAQFLQGKPKLEEEFFHTFNELHANSKQIVLISDRSPKNIAGLEDRLKSRFEWGITAKVMPPDLETKLSIVKQKCQLNQITLPEEVMEYIAQHISDNIRQMEGAIIKISVNANLMNASIDLNLAKTVLEDLQKDHAEGSSLENILLAVAQSLNLKSSEIKVSSRQKNVALARKLVVYFARLYTPNPTLSLAQFLDLKDHSSISKMYSGVKKMLEEEKSPFVLSLREEIKNRLNELNDKKTAFNSSE.

Residues 1-90 (MDTNNNIEKE…HSVDVRIEVA (90 aa)) form a domain I, interacts with DnaA modulators region. The domain II stretch occupies residues 91-112 (PKIQINAQSNINYKAIKTSVKD). The interval 113–323 (SYTFENFVVG…GAIIKISVNA (211 aa)) is domain III, AAA+ region. 4 residues coordinate ATP: glycine 153, glycine 155, lysine 156, and threonine 157. The domain IV, binds dsDNA stretch occupies residues 324-457 (NLMNASIDLN…DKKTAFNSSE (134 aa)).

This sequence belongs to the DnaA family. In terms of assembly, oligomerizes as a right-handed, spiral filament on DNA at oriC. Interacts via domain I with HobA. In a crystal with domains I and II of DnaA HobA forms tetramers with DnaA fragments bound at the dimer interface of the tetramer.

It is found in the cytoplasm. Its subcellular location is the cell inner membrane. In terms of biological role, plays an essential role in the initiation and regulation of chromosomal replication. ATP-DnaA binds to the origin of replication (oriC) to initiate formation of the DNA replication initiation complex once per cell cycle. Binds the DnaA box (a 9 base pair repeat at the origin) and separates the double-stranded (ds)DNA. Forms a right-handed helical filament on oriC DNA; dsDNA binds to the exterior of the filament while single-stranded (ss)DNA is stabiized in the filament's interior. The ATP-DnaA-oriC complex binds and stabilizes one strand of the AT-rich DNA unwinding element (DUE), permitting loading of DNA polymerase. After initiation quickly degrades to an ADP-DnaA complex that is not apt for DNA replication. Binds acidic phospholipids. Functionally, the DnaA box is 5'-TTATC[CA]A[CA]A-3' in this bacterium cycle. Multiple discrete DnaA-oriC complexes can be seen as DnaA levels increase. Binding of DnaA to oriC is increased by HobA; some chi-type structures can be seen by electron microscopy. Strand separation requires the DnaA boxes and adjacent DnaA-trio motifs but works equally well with ADP or ATP. The chain is Chromosomal replication initiator protein DnaA from Helicobacter pylori (strain ATCC 700392 / 26695) (Campylobacter pylori).